We begin with the raw amino-acid sequence, 249 residues long: Small ribosomal subunit protein uS2 (249 aa).

It belongs to the universal ribosomal protein uS2 family.

The sequence is that of Small ribosomal subunit protein uS2 from Polynucleobacter asymbioticus (strain DSM 18221 / CIP 109841 / QLW-P1DMWA-1) (Polynucleobacter necessarius subsp. asymbioticus).